The primary structure comprises 53 residues: Photosystem II reaction center protein K (53 aa).

A propeptide spanning residues 1-16 (MFYTNVETLLNTNCFA) is cleaved from the precursor. The helical transmembrane segment at 28–48 (LVDVLPIIPLLFLLLAFVWQA) threads the bilayer.

The protein belongs to the PsbK family. In terms of assembly, PSII is composed of 1 copy each of membrane proteins PsbA, PsbB, PsbC, PsbD, PsbE, PsbF, PsbH, PsbI, PsbJ, PsbK, PsbL, PsbM, PsbT, PsbY, PsbZ, Psb30/Ycf12, at least 3 peripheral proteins of the oxygen-evolving complex and a large number of cofactors. It forms dimeric complexes.

The protein resides in the plastid. The protein localises to the chloroplast thylakoid membrane. Functionally, one of the components of the core complex of photosystem II (PSII). PSII is a light-driven water:plastoquinone oxidoreductase that uses light energy to abstract electrons from H(2)O, generating O(2) and a proton gradient subsequently used for ATP formation. It consists of a core antenna complex that captures photons, and an electron transfer chain that converts photonic excitation into a charge separation. This Euglena anabaena (Euglenaria anabaena) protein is Photosystem II reaction center protein K.